The following is an 86-amino-acid chain: Large ribosomal subunit protein bL31B (86 aa).

It belongs to the bacterial ribosomal protein bL31 family. Type B subfamily. As to quaternary structure, part of the 50S ribosomal subunit.

This chain is Large ribosomal subunit protein bL31B, found in Cupriavidus necator (strain ATCC 17699 / DSM 428 / KCTC 22496 / NCIMB 10442 / H16 / Stanier 337) (Ralstonia eutropha).